We begin with the raw amino-acid sequence, 295 residues long: Phosphatidylserine decarboxylase proenzyme (295 aa).

Catalysis depends on charge relay system; for autoendoproteolytic cleavage activity residues aspartate 113, histidine 169, and serine 256. Residue serine 256 is the Schiff-base intermediate with substrate; via pyruvic acid; for decarboxylase activity of the active site. Serine 256 is subject to Pyruvic acid (Ser); by autocatalysis.

Belongs to the phosphatidylserine decarboxylase family. PSD-B subfamily. Prokaryotic type II sub-subfamily. As to quaternary structure, heterodimer of a large membrane-associated beta subunit and a small pyruvoyl-containing alpha subunit. The cofactor is pyruvate. Is synthesized initially as an inactive proenzyme. Formation of the active enzyme involves a self-maturation process in which the active site pyruvoyl group is generated from an internal serine residue via an autocatalytic post-translational modification. Two non-identical subunits are generated from the proenzyme in this reaction, and the pyruvate is formed at the N-terminus of the alpha chain, which is derived from the carboxyl end of the proenzyme. The autoendoproteolytic cleavage occurs by a canonical serine protease mechanism, in which the side chain hydroxyl group of the serine supplies its oxygen atom to form the C-terminus of the beta chain, while the remainder of the serine residue undergoes an oxidative deamination to produce ammonia and the pyruvoyl prosthetic group on the alpha chain. During this reaction, the Ser that is part of the protease active site of the proenzyme becomes the pyruvoyl prosthetic group, which constitutes an essential element of the active site of the mature decarboxylase.

It is found in the cell membrane. The enzyme catalyses a 1,2-diacyl-sn-glycero-3-phospho-L-serine + H(+) = a 1,2-diacyl-sn-glycero-3-phosphoethanolamine + CO2. It participates in phospholipid metabolism; phosphatidylethanolamine biosynthesis; phosphatidylethanolamine from CDP-diacylglycerol: step 2/2. Functionally, catalyzes the formation of phosphatidylethanolamine (PtdEtn) from phosphatidylserine (PtdSer). This is Phosphatidylserine decarboxylase proenzyme from Clostridium botulinum (strain Kyoto / Type A2).